The chain runs to 136 residues: MFQSLIAIDYGKARIGIASGQMITKTATPIGTVEAYDGVPNWIELDKIIKRWNPSDIIIGLPLDTQNFETDITKSAKDFAKEVQQRYQRKVHLINEAYSTREARWRLEEVKSKKVSHIKVDALAACVILETWMSEN.

It belongs to the YqgF nuclease family.

The protein localises to the cytoplasm. Functionally, could be a nuclease involved in processing of the 5'-end of pre-16S rRNA. The polypeptide is Putative pre-16S rRNA nuclease (Francisella tularensis subsp. holarctica (strain FTNF002-00 / FTA)).